The primary structure comprises 2633 residues: Non-reducing polyketide synthase sor2 (2633 aa).

The segment at 67 to 237 (VSNAQKLAEW…TTSTRTVAAL (171 aa)) is N-terminal acylcarrier protein transacylase domain (SAT). Cys-140 functions as the Nucleophile; for transacylase activity in the catalytic mechanism. The active-site Proton donor/acceptor; for transacylase activity is the His-258. The Ketosynthase family 3 (KS3) domain occupies 389-814 (ENDIAVIGMA…GSNASVIIKQ (426 aa)). Catalysis depends on for beta-ketoacyl synthase activity residues Cys-561, His-696, and His-737. The segment at 928 to 1239 (CFGGQVSTFV…SKASSQLSDV (312 aa)) is malonyl-CoA:ACP transacylase (MAT) domain. The tract at residues 1307–1437 (PQPVGLYTLL…GQLHFQASDD (131 aa)) is N-terminal hotdog fold. A PKS/mFAS DH domain is found at 1307-1627 (PQPVGLYTLL…YAPVSLDQLF (321 aa)). The product template (PT) domain stretch occupies residues 1338–1509 (MSDHAIGKAQ…SNESAGRLVR (172 aa)). The interval 1464–1627 (GRSDEVIQGQ…YAPVSLDQLF (164 aa)) is C-terminal hotdog fold. The region spanning 1684–1758 (EELWLRLRPV…GILKFLQSTL (75 aa)) is the Carrier domain. At Ser-1718 the chain carries O-(pantetheine 4'-phosphoryl)serine. The tract at residues 1762 to 1792 (DVHDSSETMSTVSSDGNVHSPPTSGSEMASP) is disordered. A compositionally biased stretch (polar residues) spans 1768–1790 (ETMSTVSSDGNVHSPPTSGSEMA). Positions 1982 to 2166 (FELMADFLTR…ASGFKHVRWT (185 aa)) are methyltransferase domain. Residues 2253-2495 (VTGATGSLGS…TLRALPDVDG (243 aa)) form an NADPH-binding (R) domain region.

The cofactor is pantetheine 4'-phosphate.

It functions in the pathway secondary metabolite biosynthesis. Non-reducing polyketide synthase; part of the SOR gene cluster that mediates the biosynthesis of sorbicillinoids, a diverse group of yellow secondary metabolites that restrict growth of competing pathogenic fungi but not of bacteria. Sorbicillinoids biosynthesis requires the action of two PKSs. The SOR cluster is required for the production of trichodimerol and dihydrotrichotetronin, with sor2 being sufficient for production of trichodimerol, but not dihydrotrichotetronin in the light. Sor1 iteratively combines three acetyl units and the growing chain is modified by the ketoacyl reductase subunit, and optional by the enoyl reductase subunit in the second cycle. The polyketide is then handed over to the PKS sor2, which adds three more acetyl units, and two methyl groups. Sor2 releases an aldehyde, which undergoes spontaneous cyclization resulting in the formation of sorbicillin or 2',3'-dihydrosorbicillin. The monooxygenase sor5 oxidizes sorbicillin and 2',3'-dihydrosorbicillin to 2',3'-dihydrosorbicillinol and sorbicillinol, respectively. The oxidoreductase sor8 further converts sorbicillinol into oxosorbicillinol. Sorbicillinol is the building block for the other sorbicillinoids such as disorbicillinol, bisvertinolon, dihydrobisvertinolone, and dihydrotrichotetronine. In Hypocrea jecorina (strain QM6a) (Trichoderma reesei), this protein is Non-reducing polyketide synthase sor2.